Reading from the N-terminus, the 351-residue chain is Photosystem II D2 protein (351 aa).

Residues 39 to 59 (TAYLAAGGWFTGTTFVTSWYT) traverse the membrane as a helical segment. His-116 lines the chlorophyll a pocket. A helical membrane pass occupies residues 123–139 (GFCLRQFEIARLVGIRP). Positions 128 and 141 each coordinate pheophytin a. Residues 151-164 (VFVSVFLLYPLGQA) form a helical membrane-spanning segment. His-196 is a binding site for chlorophyll a. A helical membrane pass occupies residues 206-226 (GALLCAIHGATVENTLFEDGD). The a plastoquinone site is built by His-213 and Phe-260. His-213 is a binding site for Fe cation. His-267 contributes to the Fe cation binding site. Residues 277–293 (GLWTSSIGIVGLALNLR) traverse the membrane as a helical segment.

This sequence belongs to the reaction center PufL/M/PsbA/D family. In terms of assembly, PSII is composed of 1 copy each of membrane proteins PsbA, PsbB, PsbC, PsbD, PsbE, PsbF, PsbH, PsbI, PsbJ, PsbK, PsbL, PsbM, PsbT, PsbX, PsbY, PsbZ, Psb30/Ycf12, at least 3 peripheral proteins of the oxygen-evolving complex and a large number of cofactors. It forms dimeric complexes. The D1/D2 heterodimer binds P680, chlorophylls that are the primary electron donor of PSII, and subsequent electron acceptors. It shares a non-heme iron and each subunit binds pheophytin, quinone, additional chlorophylls, carotenoids and lipids. There is also a Cl(-1) ion associated with D1 and D2, which is required for oxygen evolution. The PSII complex binds additional chlorophylls, carotenoids and specific lipids. is required as a cofactor.

The protein resides in the plastid. It is found in the chloroplast thylakoid membrane. It catalyses the reaction 2 a plastoquinone + 4 hnu + 2 H2O = 2 a plastoquinol + O2. In terms of biological role, photosystem II (PSII) is a light-driven water:plastoquinone oxidoreductase that uses light energy to abstract electrons from H(2)O, generating O(2) and a proton gradient subsequently used for ATP formation. It consists of a core antenna complex that captures photons, and an electron transfer chain that converts photonic excitation into a charge separation. The D1/D2 (PsbA/PsbD) reaction center heterodimer binds P680, the primary electron donor of PSII as well as several subsequent electron acceptors. D2 is needed for assembly of a stable PSII complex. This is Photosystem II D2 protein from Thalassiosira pseudonana (Marine diatom).